Reading from the N-terminus, the 191-residue chain is MNPEDADRILAAQAASGNQRAFGQLVARHGVALAQAARSFGIPETDVDDVVQDTFVAAWHALDDFDPDRPFRAWLFRIGLNKMRDLYRFRRVRQFLFGAENLGDLELAGGVANDEPGPEQQVAARLELARVASTLGKLDTGSREVIVLTAIVGMSQPEAAAVLGLSVKAVEGRIGRARAKLSALLDADSEK.

A Polymerase core binding motif is present at residues 49 to 62 (DVVQDTFVAAWHAL). Positions 156–175 (QPEAAAVLGLSVKAVEGRIG) form a DNA-binding region, H-T-H motif.

Belongs to the sigma-70 factor family. ECF subfamily.

Sigma factors are initiation factors that promote the attachment of RNA polymerase to specific initiation sites and are then released. This sigma factor regulates the genes for a membrane-located efflux system that confers resistance to nickel and cobalt. Its function is as follows. CnrH alone is able to activate CNR expression, while both CnrY and CrnX are needed for nickel induction of cnrH. Binds DNA in an RNA polymerase-dependent fashion. CnrH may be controlled by a CnrYX transmembrane anti-sigma factor complex which binds CnrH in the absence of Ni(2+). If Ni(2+) appears in the periplasm, it may be bound by CnrR (CnrX); the signal then would be transmitted by CnrY into the cytoplasm and CnrH would be released. The protein is RNA polymerase sigma factor CnrH (cnrH) of Cupriavidus metallidurans (strain ATCC 43123 / DSM 2839 / NBRC 102507 / CH34) (Ralstonia metallidurans).